A 717-amino-acid chain; its full sequence is Copine family protein 5 (717 aa).

Residues 193-318 (YLGGIIVSAE…KYGPGSDNVY (126 aa)) form the C2 domain. A VWFA domain is found at 377–567 (ELDQRRFDGE…LNKSRIAETA (191 aa)).

Belongs to the copine family.

The chain is Copine family protein 5 (cpna-5) from Caenorhabditis elegans.